The sequence spans 780 residues: Ribosome biogenesis protein BOP1 homolog (780 aa).

Positions 1–11 are enriched in basic residues; the sequence is MTKKQAIKRKV. Positions 1–155 are disordered; the sequence is MTKKQAIKRK…DSDTSDEEDI (155 aa). The span at 17 to 26 shows a compositional bias: polar residues; it reads TNEQSSASEP. Acidic residues-rich tracts occupy residues 44 to 53, 60 to 72, 83 to 113, and 145 to 154; these read EDTTDDEGID, SSED…DEEG, AEGD…DAEE, and EDSDTSDEED. WD repeat units lie at residues 441-482, 484-522, 566-608, 611-649, 652-691, 695-734, and 750-780; these read GHTD…RTIE, NDVV…KLLI, THFK…SQIP, KSKG…LIKK, TNSK…KPYQ, LHRN…DLLQ, and RDEF…RLYT.

It belongs to the WD repeat BOP1/ERB1 family.

The protein resides in the nucleus. It localises to the nucleolus. It is found in the nucleoplasm. Functionally, required for maturation of ribosomal RNAs and formation of the large ribosomal subunit. The polypeptide is Ribosome biogenesis protein BOP1 homolog (Drosophila virilis (Fruit fly)).